A 735-amino-acid chain; its full sequence is Polycomb protein sop-2 (735 aa).

Residues 1–15 are compositionally biased toward polar residues; the sequence is MSSNLTSNEMSSTSA. 3 disordered regions span residues 1 to 59, 223 to 288, and 300 to 534; these read MSSN…SSSS, AARS…APAA, and PQES…PVLQ. The interval 224–503 is RNA-binding; that stretch reads ARSSRMAARR…APATPATPAS (280 aa). Residues 239 to 288 are compositionally biased toward low complexity; sequence YRGAFRGAARGAPSRRPAPAAEVAPETPVAAPMAPAAPAAPATPEAAPAA. 2 stretches are compositionally biased toward basic and acidic residues: residues 317-355 and 389-398; these read DTSK…DGGR and RAAEKKKPED. The span at 399-413 shows a compositional bias: acidic residues; the sequence is SDAAEEQEVEMEVDN. Residues 450 to 470 are compositionally biased toward basic and acidic residues; it reads VEPKKEPVDEPAEKIPKRSEA. The segment covering 471–504 has biased composition (low complexity); it reads APEVPATATTKEAPPSTSSSPPDAPATPATPASS. Residues 520-534 are compositionally biased toward polar residues; that stretch reads LTGSPPESETPPVLQ. The segment at 621–712 is SAM-like; sequence LVENNHEATL…YGTEVLNHYR (92 aa).

Homodimer. Interacts with ubc-9. Binds through its N-terminal region to the N-terminal region of sor-1. Sumoylated by ubc-9. Sumoylation is required for the transcriptional regulation of homeotic genes. In terms of tissue distribution, widely expressed. Weakly expressed in most somatic cells of 50-cell stage embryos. At 200 cell stage, it is strongly expressed. By comma stage, it is expressed in most somatic cells.

It is found in the nucleus. Its function is as follows. Polycomb group (PcG) protein. PcG proteins act by forming multiprotein complexes, which are required to maintain the transcriptionally repressive state of homeotic genes throughout development. PcG proteins are not required to initiate repression, but to maintain it during later stages of development. Also required to repress expression of other genes and for localization of sor-1. Binds RNA. In Caenorhabditis elegans, this protein is Polycomb protein sop-2 (sop-2).